The primary structure comprises 664 residues: Protein-arginine deiminase type-3 (664 aa).

The protein belongs to the protein arginine deiminase family. It depends on Ca(2+) as a cofactor. As to expression, epidermis and hair follicles.

It localises to the cytoplasm. The catalysed reaction is L-arginyl-[protein] + H2O = L-citrullyl-[protein] + NH4(+). In terms of biological role, catalyzes the deimination of arginine residues of proteins. The protein is Protein-arginine deiminase type-3 (Padi3) of Mus musculus (Mouse).